A 174-amino-acid chain; its full sequence is N-terminal acetyltransferase B complex catalytic subunit NAA20 (174 aa).

The N-acetyltransferase domain maps to 2–151; that stretch reads TTIRRFSCND…DGLDMRKALS (150 aa).

This sequence belongs to the acetyltransferase family. ARD1 subfamily.

The enzyme catalyses N-terminal L-methionyl-L-asparaginyl-[protein] + acetyl-CoA = N-terminal N(alpha)-acetyl-L-methionyl-L-asparaginyl-[protein] + CoA + H(+). It catalyses the reaction N-terminal L-methionyl-L-glutaminyl-[protein] + acetyl-CoA = N-terminal N(alpha)-acetyl-L-methionyl-L-glutaminyl-[protein] + CoA + H(+). The catalysed reaction is N-terminal L-methionyl-L-aspartyl-[protein] + acetyl-CoA = N-terminal N(alpha)-acetyl-L-methionyl-L-aspartyl-[protein] + CoA + H(+). It carries out the reaction N-terminal L-methionyl-L-glutamyl-[protein] + acetyl-CoA = N-terminal N(alpha)-acetyl-L-methionyl-L-glutamyl-[protein] + CoA + H(+). Its function is as follows. Catalytic subunit of the NatB N-alpha-acetyltransferase complex. Involved in plant immunity through the regulation of SNC1 stability. The sequence is that of N-terminal acetyltransferase B complex catalytic subunit NAA20 from Arabidopsis thaliana (Mouse-ear cress).